The sequence spans 466 residues: Endoglucanase E-5 (466 aa).

Positions 1–36 (MAKSPAARKGXPPVAVAVTAALALLIALLSPGVAQA) are cleaved as a signal peptide. Positions 37 to 139 (AGLTATVTKE…TINGAPCDEG (103 aa)) constitute a CBM2 domain. The tract at residues 129 to 166 (CTINGAPCDEGSEPGGPGGPGTPSPDPGTQPGTGTPVE) is disordered. The active-site Proton donor is the E299. The Nucleophile role is filled by E391.

This sequence belongs to the glycosyl hydrolase 5 (cellulase A) family.

The enzyme catalyses Endohydrolysis of (1-&gt;4)-beta-D-glucosidic linkages in cellulose, lichenin and cereal beta-D-glucans.. It functions in the pathway glycan metabolism; cellulose degradation. This is Endoglucanase E-5 (celE) from Thermobifida fusca (Thermomonospora fusca).